Reading from the N-terminus, the 203-residue chain is dITP/XTP pyrophosphatase (203 aa).

16–21 (SHNRGK) is a substrate binding site. Mg(2+) contacts are provided by Glu48 and Asp77. Asp77 acts as the Proton acceptor in catalysis. Residues Ser78, 161–164 (FGYD), Lys184, and 189–190 (HR) each bind substrate.

This sequence belongs to the HAM1 NTPase family. In terms of assembly, homodimer. Requires Mg(2+) as cofactor.

The enzyme catalyses XTP + H2O = XMP + diphosphate + H(+). It carries out the reaction dITP + H2O = dIMP + diphosphate + H(+). The catalysed reaction is ITP + H2O = IMP + diphosphate + H(+). Functionally, pyrophosphatase that catalyzes the hydrolysis of nucleoside triphosphates to their monophosphate derivatives, with a high preference for the non-canonical purine nucleotides XTP (xanthosine triphosphate), dITP (deoxyinosine triphosphate) and ITP. Seems to function as a house-cleaning enzyme that removes non-canonical purine nucleotides from the nucleotide pool, thus preventing their incorporation into DNA/RNA and avoiding chromosomal lesions. This chain is dITP/XTP pyrophosphatase, found in Rhodospirillum centenum (strain ATCC 51521 / SW).